Reading from the N-terminus, the 576-residue chain is Ecdysone receptor (576 aa).

The tract at residues 1–162 (MSLGARGYRR…GPAPRQQEEL (162 aa)) is modulating. A disordered region spans residues 87 to 154 (CTMEQQQPQP…GEARRQKKGP (68 aa)). Positions 91–106 (QQQPQPQQQPQQTQPL) are enriched in low complexity. Residues 107–117 (PSMPLPMPPTT) show a composition bias toward pro residues. 2 NR C4-type zinc fingers span residues 163-183 (CLVC…CEGC) and 199-223 (CKFG…LKKC). A DNA-binding region (nuclear receptor) is located at residues 163–235 (CLVCGDRASG…VGMRPECVVP (73 aa)). A disordered region spans residues 245–269 (EKKAQREKDKLPVSTTTVDDHMPPI). The NR LBD domain maps to 314 to 548 (NQKSLIARLV…FLEEIWDVAD (235 aa)).

This sequence belongs to the nuclear hormone receptor family. NR1 subfamily.

The protein localises to the nucleus. In terms of biological role, receptor for ecdysone. Binds to ecdysone response elements (ECRES). The protein is Ecdysone receptor (EcR) of Heliothis virescens (Tobacco budworm moth).